Here is a 194-residue protein sequence, read N- to C-terminus: Ras-related protein Rab-22A (194 aa).

12–20 provides a ligand contact to GTP; it reads GDTGVGKSS. Residues 34–42 carry the Effector region motif; it reads INPTIGASF. Residues 60–64, 118–121, and 148–150 each bind GTP; these read DTAGQ, NKCD, and SAK. The interval 170–194 is disordered; sequence DANPPSGGKGFKLRRQPSEPQRSCC. S-geranylgeranyl cysteine attachment occurs at residues C193 and C194.

Belongs to the small GTPase superfamily. Rab family. In terms of assembly, interacts directly with ZFYVE20. Interacts (in its GTP-bound form) with RINL and RABGEF1. Binds EEA1.

It is found in the endosome membrane. Its subcellular location is the cell membrane. The protein localises to the early endosome. The protein resides in the late endosome. It localises to the cell projection. It is found in the ruffle. Its subcellular location is the cytoplasmic vesicle. The protein localises to the phagosome. The protein resides in the phagosome membrane. Its function is as follows. Plays a role in endocytosis and intracellular protein transport. Mediates trafficking of TF from early endosomes to recycling endosomes. Required for NGF-mediated endocytosis of NTRK1, and subsequent neurite outgrowth. Binds GTP and GDP and has low GTPase activity. Alternates between a GTP-bound active form and a GDP-bound inactive form. The polypeptide is Ras-related protein Rab-22A (RAB22A) (Canis lupus familiaris (Dog)).